Here is a 271-residue protein sequence, read N- to C-terminus: Ribosomal RNA small subunit methyltransferase A (271 aa).

S-adenosyl-L-methionine contacts are provided by histidine 11, leucine 13, glycine 38, glutamate 58, aspartate 86, and asparagine 101.

It belongs to the class I-like SAM-binding methyltransferase superfamily. rRNA adenine N(6)-methyltransferase family. RsmA subfamily.

The protein localises to the cytoplasm. It carries out the reaction adenosine(1518)/adenosine(1519) in 16S rRNA + 4 S-adenosyl-L-methionine = N(6)-dimethyladenosine(1518)/N(6)-dimethyladenosine(1519) in 16S rRNA + 4 S-adenosyl-L-homocysteine + 4 H(+). Its function is as follows. Specifically dimethylates two adjacent adenosines (A1518 and A1519) in the loop of a conserved hairpin near the 3'-end of 16S rRNA in the 30S particle. May play a critical role in biogenesis of 30S subunits. The polypeptide is Ribosomal RNA small subunit methyltransferase A (Helicobacter pylori (strain HPAG1)).